The sequence spans 73 residues: U-scoloptoxin(03)-Ssd1b (73 aa).

A signal peptide spans 1 to 23 (MKSSMAVLLVMGLIIFTLDKCYS).

In terms of processing, contains 3 disulfide bonds. Expressed by the venom gland.

The protein resides in the secreted. This chain is U-scoloptoxin(03)-Ssd1b, found in Scolopendra dehaani (Thai centipede).